The chain runs to 1357 residues: Vascular endothelial growth factor receptor 2 (1357 aa).

Positions 1–22 (MAKTSYALLLLDILLTFNVAKA) are cleaved as a signal peptide. The Extracellular segment spans residues 23–774 (IELRFVPDPP…GAEEKMNVEL (752 aa)). 7 Ig-like C2-type domains span residues 32–120 (PTLN…SVAV), 120–222 (VYVF…VAVV), 216–330 (PYIV…ASLI), 335–426 (PFIA…RTFQ), 433–553 (PRIF…VIVF), 556–667 (TRFL…LLHN), and 676–762 (SRIV…ARIS). 19 N-linked (GlcNAc...) asparagine glycosylation sites follow: N35, N44, N66, N97, N161, N209, N247, N272, N303, N307, N407, N501, N560, N621, N631, N640, N681, N688, and N713. 2 disulfide bridges follow: C53–C104 and C153–C203. C248 and C314 are disulfide-bonded. C457 and C538 are oxidised to a cystine. An intrachain disulfide couples C579 to C651. C697 and C746 are oxidised to a cystine. The helical transmembrane segment at 775-795 (IMPIGAVVIAMFLWLLIVFVI) threads the bilayer. Over 796–1357 (RNRKRPNDGD…AEVRYSAPPV (562 aa)) the chain is Cytoplasmic. Residues 843–1173 (LKLGEPLGRG…FTQLVEHLGN (331 aa)) enclose the Protein kinase domain. ATP-binding positions include 849-857 (LGRGAFGQV) and K877. Residues 944–975 (YSPYKKRTPRMPNRREVQQDEDPREGDLGLGT) are disordered. The active-site Proton acceptor is the D1039. Y1065, Y1070, Y1186, and Y1222 each carry phosphotyrosine; by autocatalysis. Positions 1296-1357 (SLASESSNQT…AEVRYSAPPV (62 aa)) are disordered. Positions 1298 to 1312 (ASESSNQTSGYQSGY) are enriched in polar residues.

Belongs to the protein kinase superfamily. Tyr protein kinase family. CSF-1/PDGF receptor subfamily. As to quaternary structure, interacts with isoform VEGF165 of vegfaa and, to a lesser extent, with isoform VEGF171 of vegfab. Interacts (via juxtamembrane region) with chaperone pdcl3 (via thioredoxin fold region); the interaction leads to increased vegfr2 abundance through inhibition of its ubiquitination and degradation. In terms of tissue distribution, first expressed in embryos between 5- and 7-somites in the bilateral stripes that contain the developing angioblasts, and then localized to the intermediate cell mass (ICM) and the developing vasculature. By 30 hpf, expressed in the major trunk, head and intersomitic vessels, persisting through 4 dpf when expression is seen in developing subintestinal veins and in the remaining vasculature.

It is found in the cell membrane. It localises to the cytoplasm. The protein resides in the nucleus. The protein localises to the cytoplasmic vesicle. Its subcellular location is the early endosome. It is found in the cell junction. It localises to the endoplasmic reticulum. It carries out the reaction L-tyrosyl-[protein] + ATP = O-phospho-L-tyrosyl-[protein] + ADP + H(+). Its function is as follows. Receptor for VEGF or VEGFC. Has a tyrosine-protein kinase activity. Combinations of multiple VEGF receptors are required for development of different blood vessel types in the embryo. Involved in angiogenesis, specifically in VEGF-induced sprouting of new blood vessels. Particularly involved in artery formation. Does not appear to be required for hematopoiesis. In Danio rerio (Zebrafish), this protein is Vascular endothelial growth factor receptor 2.